Reading from the N-terminus, the 394-residue chain is Flap endonuclease 1 (394 aa).

The tract at residues 1–104 (MGIKQLFSII…GELAKRFQRK (104 aa)) is N-domain. Asp34 serves as a coordination point for Mg(2+). 2 residues coordinate DNA: Arg47 and Arg70. 5 residues coordinate Mg(2+): Asp86, Glu158, Glu160, Asp179, and Asp181. The tract at residues 122–253 (DVEKFSRRTV…STALKLIREH (132 aa)) is I-domain. Glu158 lines the DNA pocket. Positions 231 and 233 each coordinate DNA. Residue Asp233 coordinates Mg(2+). Residues 341–349 (QQARIEGFF) are interaction with PCNA. The span at 356–383 (EEEKKAHKRKLEEQAEQKRKKVKEEKKE) shows a compositional bias: basic and acidic residues. The interval 356-394 (EEEKKAHKRKLEEQAEQKRKKVKEEKKEKAKLKAKPRGA) is disordered. Residues 384-394 (KAKLKAKPRGA) are compositionally biased toward basic residues.

It belongs to the XPG/RAD2 endonuclease family. FEN1 subfamily. In terms of assembly, interacts with PCNA. Three molecules of FEN1 bind to one PCNA trimer with each molecule binding to one PCNA monomer. PCNA stimulates the nuclease activity without altering cleavage specificity. Mg(2+) serves as cofactor. Post-translationally, phosphorylated. Phosphorylation upon DNA damage induces relocalization to the nuclear plasma.

The protein resides in the nucleus. The protein localises to the nucleolus. It localises to the nucleoplasm. Its subcellular location is the mitochondrion. Its function is as follows. Structure-specific nuclease with 5'-flap endonuclease and 5'-3' exonuclease activities involved in DNA replication and repair. During DNA replication, cleaves the 5'-overhanging flap structure that is generated by displacement synthesis when DNA polymerase encounters the 5'-end of a downstream Okazaki fragment. It enters the flap from the 5'-end and then tracks to cleave the flap base, leaving a nick for ligation. Also involved in the long patch base excision repair (LP-BER) pathway, by cleaving within the apurinic/apyrimidinic (AP) site-terminated flap. Acts as a genome stabilization factor that prevents flaps from equilibrating into structures that lead to duplications and deletions. Also possesses 5'-3' exonuclease activity on nicked or gapped double-stranded DNA, and exhibits RNase H activity. Also involved in replication and repair of rDNA and in repairing mitochondrial DNA. This is Flap endonuclease 1 from Sordaria macrospora (strain ATCC MYA-333 / DSM 997 / K(L3346) / K-hell).